We begin with the raw amino-acid sequence, 204 residues long: Superoxide dismutase [Mn] (204 aa).

Mn(2+) is bound at residue histidine 27. Threonine 34 and threonine 70 each carry phosphothreonine. 3 residues coordinate Mn(2+): histidine 82, aspartate 164, and histidine 168.

It belongs to the iron/manganese superoxide dismutase family. Homodimer. It depends on Mn(2+) as a cofactor.

The catalysed reaction is 2 superoxide + 2 H(+) = H2O2 + O2. Destroys superoxide anion radicals which are normally produced within the cells and which are toxic to biological systems. The sequence is that of Superoxide dismutase [Mn] (sodA) from Bacillus caldotenax.